The following is a 496-amino-acid chain: Putative zinc finger CCCH domain-containing protein 48 (496 aa).

2 disordered regions span residues 1–77 and 108–194; these read MADS…QPVH and MGAG…HPDD. Positions 143 to 156 are enriched in acidic residues; it reads HLAEEEEEEEEEHY. C3H1-type zinc fingers lie at residues 377–406, 439–467, and 469–496; these read EHKTKLCAEYYSRGLGCPRGNTCKYAHGED, KYKTKLCKTFTSGGLCLFAANCRFAHGEV, and LGKKEPCWYFFSGQTCPRGDTCGFRHSY.

This chain is Putative zinc finger CCCH domain-containing protein 48, found in Oryza sativa subsp. japonica (Rice).